Here is a 125-residue protein sequence, read N- to C-terminus: Large ribosomal subunit protein mL51 (125 aa).

A mitochondrion-targeting transit peptide spans 1 to 29 (MWSVQQLLWGCRSLLTQGCRSFSLGSRDL).

This sequence belongs to the mitochondrion-specific ribosomal protein mL51 family. As to quaternary structure, component of the mitochondrial ribosome large subunit (39S) which comprises a 16S rRNA and about 50 distinct proteins.

The protein localises to the mitochondrion. The chain is Large ribosomal subunit protein mL51 (mrpl51) from Xenopus tropicalis (Western clawed frog).